The following is a 312-amino-acid chain: Acetyl-coenzyme A carboxylase carboxyl transferase subunit alpha (312 aa).

Residues 36–286 form the CoA carboxyltransferase C-terminal domain; sequence NLEKEISKTY…ADYVKKSLNE (251 aa).

This sequence belongs to the AccA family. As to quaternary structure, acetyl-CoA carboxylase is a heterohexamer composed of biotin carboxyl carrier protein (AccB), biotin carboxylase (AccC) and two subunits each of ACCase subunit alpha (AccA) and ACCase subunit beta (AccD).

It is found in the cytoplasm. It catalyses the reaction N(6)-carboxybiotinyl-L-lysyl-[protein] + acetyl-CoA = N(6)-biotinyl-L-lysyl-[protein] + malonyl-CoA. It functions in the pathway lipid metabolism; malonyl-CoA biosynthesis; malonyl-CoA from acetyl-CoA: step 1/1. In terms of biological role, component of the acetyl coenzyme A carboxylase (ACC) complex. First, biotin carboxylase catalyzes the carboxylation of biotin on its carrier protein (BCCP) and then the CO(2) group is transferred by the carboxyltransferase to acetyl-CoA to form malonyl-CoA. This Campylobacter jejuni subsp. jejuni serotype O:6 (strain 81116 / NCTC 11828) protein is Acetyl-coenzyme A carboxylase carboxyl transferase subunit alpha.